The following is a 711-amino-acid chain: Receptor-like protein 43 (711 aa).

The N-terminal stretch at 1-30 is a signal peptide; that stretch reads MKGFWNSKSTIRITLSFIFLFISQFSDVLA. The Extracellular portion of the chain corresponds to 31–666; sequence APTRHLCRPE…EDEEVISWIA (636 aa). Residues asparagine 78, asparagine 114, asparagine 143, asparagine 167, and asparagine 191 are each glycosylated (N-linked (GlcNAc...) asparagine). LRR repeat units follow at residues 120-143, 144-168, 170-192, 193-216, 218-240, 241-266, 268-288, and 289-316; these read LHFL…SIEN, LSHL…IGNL, HLTF…IGNL, SHLT…IGGL, HLTT…IGNL, SNLT…NLSQ, TRLD…LWTL, and PNLF…SMGH. N-linked (GlcNAc...) asparagine glycosylation is found at asparagine 239, asparagine 242, asparagine 252, and asparagine 263. N-linked (GlcNAc...) asparagine glycans are attached at residues asparagine 295, asparagine 323, asparagine 347, asparagine 362, and asparagine 372. The stretch at 317–334 is one LRR 9; degenerate repeat; the sequence is LLGSNNNFTGKIPSFICE. 10 LRR repeats span residues 335-358, 360-384, 386-406, 407-430, 431-452, 453-476, 519-543, 544-567, 568-591, and 593-616; these read LRSL…CMGN, KSNL…IFEI, RSLD…LRFF, STLE…LTSL, PKLQ…EASF, LKLR…YFVK, LTIY…IGLL, KELL…MGKL, TALE…IGNL, and FLSC…QFLT. N-linked (GlcNAc...) asparagine glycosylation occurs at asparagine 420. Asparagine 466 carries an N-linked (GlcNAc...) asparagine glycan. Asparagine 550, asparagine 590, and asparagine 598 each carry an N-linked (GlcNAc...) asparagine glycan. A helical transmembrane segment spans residues 667–687; it reads AAIGFIPGIVLGLTIGYILVF. At 688–711 the chain is on the cytoplasmic side; it reads YKPEWFIKTFGRNNCRRRSTTTTH.

It belongs to the RLP family.

The protein resides in the cell membrane. The chain is Receptor-like protein 43 from Arabidopsis thaliana (Mouse-ear cress).